Consider the following 218-residue polypeptide: GILT-like protein ZK669.3 (218 aa).

Positions 1 to 21 (MRRLNGVFICLILFITKISYA) are cleaved as a signal peptide. Residues N129 and N185 are each glycosylated (N-linked (GlcNAc...) asparagine).

The protein belongs to the GILT family.

Its subcellular location is the secreted. The sequence is that of GILT-like protein ZK669.3 from Caenorhabditis elegans.